A 497-amino-acid chain; its full sequence is tRNA-2-methylthio-N(6)-dimethylallyladenosine synthase (497 aa).

Residues 1–50 (MTGTSNIPTHGKEHKDAPALLPLPAPNPHHTHAAHPGNPSHDRPPSRGKL) are disordered. The MTTase N-terminal domain maps to 48–165 (GKLFIKTHGC…LPDMIRARRE (118 aa)). [4Fe-4S] cluster contacts are provided by Cys57, Cys94, Cys128, Cys202, Cys206, and Cys209. Residues 188 to 430 (RAEGPSAFVS…QKHINTYAAD (243 aa)) enclose the Radical SAM core domain. Residues 433–496 (KRMIGTVQTV…SNSLRGRVHT (64 aa)) form the TRAM domain.

It belongs to the methylthiotransferase family. MiaB subfamily. Monomer. The cofactor is [4Fe-4S] cluster.

The protein localises to the cytoplasm. It carries out the reaction N(6)-dimethylallyladenosine(37) in tRNA + (sulfur carrier)-SH + AH2 + 2 S-adenosyl-L-methionine = 2-methylsulfanyl-N(6)-dimethylallyladenosine(37) in tRNA + (sulfur carrier)-H + 5'-deoxyadenosine + L-methionine + A + S-adenosyl-L-homocysteine + 2 H(+). In terms of biological role, catalyzes the methylthiolation of N6-(dimethylallyl)adenosine (i(6)A), leading to the formation of 2-methylthio-N6-(dimethylallyl)adenosine (ms(2)i(6)A) at position 37 in tRNAs that read codons beginning with uridine. The chain is tRNA-2-methylthio-N(6)-dimethylallyladenosine synthase from Xylella fastidiosa (strain 9a5c).